Reading from the N-terminus, the 212-residue chain is Putative 3-methyladenine DNA glycosylase (212 aa).

This sequence belongs to the DNA glycosylase MPG family.

The chain is Putative 3-methyladenine DNA glycosylase from Frankia casuarinae (strain DSM 45818 / CECT 9043 / HFP020203 / CcI3).